The sequence spans 247 residues: 14-3-3 protein gamma (247 aa).

Met-1 carries the post-translational modification N-acetylmethionine. N-acetylvaline; in 14-3-3 protein gamma, N-terminally processed is present on Val-2. The segment at 2–247 (VDREQLVQKA…QDDDGGEGNN (246 aa)) is interaction with SPATA18/MIEAP. The residue at position 71 (Ser-71) is a Phosphoserine. Tyr-133 is modified (phosphotyrosine). The residue at position 145 (Thr-145) is a Phosphothreonine. The residue at position 215 (Ser-215) is a Phosphoserine. Residue Thr-234 is modified to Phosphothreonine. Ser-235 carries the post-translational modification Phosphoserine.

This sequence belongs to the 14-3-3 family. Homodimer. Part of a complex that contains DSG3, PKP1, YAP1 and YWHAG; the complex is required for localization of DSG3 and YAP1 to the cell membrane in keratinocytes. Interacts with SAMSN1. Interacts with RAF1, SSH1 and CRTC2/TORC2. Interacts with ABL1 (phosphorylated form); the interaction retains it in the cytoplasm. Interacts with GAB2. Interacts with MDM4 (phosphorylated); negatively regulates MDM4 activity toward TP53. Interacts with PKA-phosphorylated AANAT and SIRT2. Interacts with the 'Thr-369' phosphorylated form of DAPK2. Interacts with PI4KB, TBC1D22A and TBC1D22B. Interacts with SLITRK1. Interacts with LRRK2; this interaction is dependent on LRRK2 phosphorylation. Interacts with MARK2 and MARK3. Interacts with MEFV. Interacts with ENDOG, TSC2 and PIK3C3; interaction with ENDOG weakens its interaction with TSC2 and PIK3C3. Interacts with (phosphorylated) WDR24. Interacts with BEST1; this interaction promotes L-glutamate channel activity leading to the positive regulation of NMDA glutamate receptor activity through the L-glutamate secretion. Interacts with PKP1 (when phosphorylated); the interaction results in translocation of PKP1 to the cytoplasm and loss of intercellular adhesion in keratinocytes. Interacts with SPATA18/MIEAP; a protein that also plays a role in MALM. Post-translationally, phosphorylated by various PKC isozymes.

The protein localises to the cytoplasm. It is found in the cytosol. The protein resides in the mitochondrion matrix. In terms of biological role, adapter protein implicated in the regulation of a large spectrum of both general and specialized signaling pathways. Binds to a large number of partners, usually by recognition of a phosphoserine or phosphothreonine motif. Binding generally results in the modulation of the activity of the binding partner. Promotes inactivation of WDR24 component of the GATOR2 complex by binding to phosphorylated WDR24. Participates in the positive regulation of NMDA glutamate receptor activity by promoting the L-glutamate secretion through interaction with BEST1. Reduces keratinocyte intercellular adhesion, via interacting with PKP1 and sequestering it in the cytoplasm, thereby reducing its incorporation into desmosomes. Plays a role in mitochondrial protein catabolic process (also named MALM) that promotes the degradation of damaged proteins inside mitochondria. The sequence is that of 14-3-3 protein gamma from Bos taurus (Bovine).